We begin with the raw amino-acid sequence, 638 residues long: Voltage-gated potassium channel KCNC2 (638 aa).

Topologically, residues 1–229 are cytoplasmic; that stretch reads MGKIENNERV…EDPYSSRAAR (229 aa). The tract at residues 47–75 is disordered; sequence LTAAGDKLQPLPPPLSPPPRPPPLSPVPS. Residues 56–72 are compositionally biased toward pro residues; sequence PLPPPLSPPPRPPPLSP. Zn(2+) contacts are provided by His124, Cys130, Cys151, and Cys152. Residues 230 to 248 traverse the membrane as a helical segment; sequence FIAFASLFFILVSITTFCL. N-linked (GlcNAc...) asparagine glycosylation is found at Asn259 and Asn266. Residues 284–303 form a helical membrane-spanning segment; the sequence is YVEGVCVVWFTFEFLVRIVF. Over 304-314 the chain is Cytoplasmic; the sequence is SPNKLEFIKNL. Residues 315 to 337 traverse the membrane as a helical segment; it reads LNIIDFVAILPFYLEVGLSGLSS. Residues 346–368 form a helical; Voltage-sensor membrane-spanning segment; the sequence is FLRVVRFVRILRIFKLTRHFVGL. The Cytoplasmic portion of the chain corresponds to 369–381; the sequence is RVLGHTLRASTNE. The helical transmembrane segment at 382 to 401 threads the bilayer; the sequence is FLLLIIFLALGVLIFATMIY. 4 residues coordinate K(+): Thr437, Leu438, Gly439, and Tyr440. Residues 437–442 carry the Selectivity filter motif; it reads TLGYGD. Residues 451–473 form a helical membrane-spanning segment; that stretch reads MLVGALCALAGVLTIAMPVPVIV. Residues 474-638 lie on the Cytoplasmic side of the membrane; that stretch reads NNFGMYYSLA…RSRSPIPSIL (165 aa). Residues 538 to 572 are disordered; sequence SVLSGDDSTGSEPPLSPPERLPIRRSSTRDKNRRG. Phosphoserine; by PKA is present on Ser564. At Ser600 the chain carries Phosphoserine.

This sequence belongs to the potassium channel family. C (Shaw) (TC 1.A.1.2) subfamily. Kv3.2/KCNC2 sub-subfamily. In terms of assembly, homotetramer and heterotetramer with other channel-forming alpha subunits, such as KCNC1. Interacts with KCNC1. Homotetramer or heterotetramer channel activity is regulated by association with modulating ancillary subunits such as KCNE1, KCNE2 and KCNE3, creating a functionally diverse range of channel complexes. Interacts with KCNE1, KCNE2 and KCNE3. Phosphorylated by PKA in cortical synaptosomes. cAMP-dependent phosphorylation inhibits channel activity. Histamine H2 receptor- and PKA-induced phosphorylation extends action potential spike duration, reduces action potential spike amplitude, sustains maximum firing frequency in hippocampal interneurons; also reduces the incidence of high-frequency oscillations in hippocampal CA3 pyramidal cell layers. As to expression, expressed in neurons of the visual cortex during postnatal development. Expressed in neurons of the globus pallidus at postnatal age day 7 (P7), onward. Expressed in thalamic relay neurons. Expressed in neurons in layer IV and deeper cortical layers of the neocortex. Expressed in hippocampal interneurons. Expressed in nonpyramidal interneurons in the basolateral amygdala. Expressed in retinal ganglion cells (at protein level). Widely expressed in the brain. Expressed in numerous thalamic relay neurons throughout the dorsal thalamus. Expressed in interneurons of the deep layers V-VI of the cerebral cortex, the CA1 and CA3 pyramidal and dentate gyrus (DG) granule cells of the hippocampus, in neurons of the caudate-putamen, globus pallidus and subthalamic nucleus. Also expressed in the optic layer of interior colliculus, the inferior colliculus, the red nucleus, the medial geniculate, the ventral lateral lemiscus, the reticulotegmental nucleus and in the deep cerebellar nuclei. Expressed in globus pallidus (GP) neurons.

Its subcellular location is the cell membrane. It localises to the membrane. The protein resides in the perikaryon. It is found in the cell projection. The protein localises to the axon. Its subcellular location is the synapse. It localises to the synaptosome. The protein resides in the dendrite. It is found in the postsynaptic cell membrane. The protein localises to the presynaptic cell membrane. Its subcellular location is the apical cell membrane. It localises to the basolateral cell membrane. The catalysed reaction is K(+)(in) = K(+)(out). With respect to regulation, inhibited by Stichodactyla helianthus peptide ShK. Inhibited by millimolar levels of tetraethylammonium (TEA). Contrary to other channels, inhibited only by millimolar levels of 4-aminopyridine (4-AP). Its function is as follows. Voltage-gated potassium channel that mediates transmembrane potassium transport in excitable membranes, primarily in the brain. Contributes to the regulation of the fast action potential repolarization and in sustained high-frequency firing in neurons of the central nervous system. Homotetramer channels mediate delayed-rectifier voltage-dependent potassium currents that activate rapidly at high-threshold voltages and inactivate slowly. Forms tetrameric channels through which potassium ions pass in accordance with their electrochemical gradient. The channel alternates between opened and closed conformations in response to the voltage difference across the membrane. Can form functional homotetrameric channels and heterotetrameric channels that contain variable proportions of KCNC1, and possibly other family members as well; channel properties depend on the type of alpha subunits that are part of the channel. Channel properties may be modulated either by the association with ancillary subunits, such as KCNE1, KCNE2 and KCNE3 or indirectly by nitric oxide (NO) through a cGMP- and PKG-mediated signaling cascade, slowing channel activation and deactivation of delayed rectifier potassium channels. Contributes to fire sustained trains of very brief action potentials at high frequency in retinal ganglion cells, thalamocortical and suprachiasmatic nucleus (SCN) neurons and in hippocampal and neocortical interneurons. Sustained maximal action potential firing frequency in inhibitory hippocampal interneurons is negatively modulated by histamine H2 receptor activation in a cAMP- and protein kinase (PKA) phosphorylation-dependent manner. Plays a role in maintaining the fidelity of synaptic transmission in neocortical GABAergic interneurons by generating action potential (AP) repolarization at nerve terminals, thus reducing spike-evoked calcium influx and GABA neurotransmitter release. Required for long-range synchronization of gamma oscillations over distance in the neocortex. Contributes to the modulation of the circadian rhythm of spontaneous action potential firing in suprachiasmatic nucleus (SCN) neurons in a light-dependent manner. The polypeptide is Voltage-gated potassium channel KCNC2 (Rattus norvegicus (Rat)).